A 292-amino-acid chain; its full sequence is 4-hydroxy-tetrahydrodipicolinate synthase (292 aa).

Threonine 45 is a pyruvate binding site. Tyrosine 133 acts as the Proton donor/acceptor in catalysis. The active-site Schiff-base intermediate with substrate is lysine 161. Isoleucine 203 serves as a coordination point for pyruvate.

This sequence belongs to the DapA family. Homotetramer; dimer of dimers.

It is found in the cytoplasm. The enzyme catalyses L-aspartate 4-semialdehyde + pyruvate = (2S,4S)-4-hydroxy-2,3,4,5-tetrahydrodipicolinate + H2O + H(+). Its pathway is amino-acid biosynthesis; L-lysine biosynthesis via DAP pathway; (S)-tetrahydrodipicolinate from L-aspartate: step 3/4. Catalyzes the condensation of (S)-aspartate-beta-semialdehyde [(S)-ASA] and pyruvate to 4-hydroxy-tetrahydrodipicolinate (HTPA). The sequence is that of 4-hydroxy-tetrahydrodipicolinate synthase from Nitrosomonas europaea (strain ATCC 19718 / CIP 103999 / KCTC 2705 / NBRC 14298).